We begin with the raw amino-acid sequence, 209 residues long: Kynurenine formamidase (209 aa).

A substrate-binding site is contributed by Phe-18. Positions 48, 52, and 54 each coordinate Zn(2+). Catalysis depends on His-58, which acts as the Proton donor/acceptor. Zn(2+) is bound by residues His-160 and Glu-172.

The protein belongs to the Cyclase 1 superfamily. KynB family. As to quaternary structure, homodimer. The cofactor is Zn(2+).

The enzyme catalyses N-formyl-L-kynurenine + H2O = L-kynurenine + formate + H(+). Its pathway is amino-acid degradation; L-tryptophan degradation via kynurenine pathway; L-kynurenine from L-tryptophan: step 2/2. Catalyzes the hydrolysis of N-formyl-L-kynurenine to L-kynurenine, the second step in the kynurenine pathway of tryptophan degradation. The sequence is that of Kynurenine formamidase from Bordetella petrii (strain ATCC BAA-461 / DSM 12804 / CCUG 43448).